Here is a 419-residue protein sequence, read N- to C-terminus: L-rhamnose isomerase (419 aa).

Mn(2+)-binding residues include His262, Asp294, and Asp296.

This sequence belongs to the rhamnose isomerase family. Homotetramer. Mn(2+) serves as cofactor.

It localises to the cytoplasm. The catalysed reaction is L-rhamnopyranose = L-rhamnulose. It participates in carbohydrate degradation; L-rhamnose degradation; glycerone phosphate from L-rhamnose: step 1/3. Functionally, catalyzes the interconversion of L-rhamnose and L-rhamnulose. The protein is L-rhamnose isomerase of Salmonella newport (strain SL254).